Here is a 161-residue protein sequence, read N- to C-terminus: ATP synthase subunit b 1 (161 aa).

The chain crosses the membrane as a helical span at residues 3-23 (FDASFFALVGLVLFFVLIAYL).

Belongs to the ATPase B chain family. In terms of assembly, F-type ATPases have 2 components, F(1) - the catalytic core - and F(0) - the membrane proton channel. F(1) has five subunits: alpha(3), beta(3), gamma(1), delta(1), epsilon(1). F(0) has three main subunits: a(1), b(2) and c(10-14). The alpha and beta chains form an alternating ring which encloses part of the gamma chain. F(1) is attached to F(0) by a central stalk formed by the gamma and epsilon chains, while a peripheral stalk is formed by the delta and b chains.

The protein localises to the cell inner membrane. F(1)F(0) ATP synthase produces ATP from ADP in the presence of a proton or sodium gradient. F-type ATPases consist of two structural domains, F(1) containing the extramembraneous catalytic core and F(0) containing the membrane proton channel, linked together by a central stalk and a peripheral stalk. During catalysis, ATP synthesis in the catalytic domain of F(1) is coupled via a rotary mechanism of the central stalk subunits to proton translocation. In terms of biological role, component of the F(0) channel, it forms part of the peripheral stalk, linking F(1) to F(0). This Agrobacterium fabrum (strain C58 / ATCC 33970) (Agrobacterium tumefaciens (strain C58)) protein is ATP synthase subunit b 1.